The following is an 897-amino-acid chain: Translation initiation factor IF-2 (897 aa).

Residues 402–570 (NRAPIVTIMG…SILVQSEILE (169 aa)) form the tr-type G domain. Positions 411–418 (GHVDHGKT) are G1. 411 to 418 (GHVDHGKT) contacts GTP. A G2 region spans residues 436–440 (GITQN). A G3 region spans residues 458 to 461 (DTPG). GTP is bound by residues 458 to 462 (DTPGH) and 512 to 515 (NKID). The interval 512–515 (NKID) is G4. The interval 548-550 (SAV) is G5.

The protein belongs to the TRAFAC class translation factor GTPase superfamily. Classic translation factor GTPase family. IF-2 subfamily.

Its subcellular location is the cytoplasm. Its function is as follows. One of the essential components for the initiation of protein synthesis. Protects formylmethionyl-tRNA from spontaneous hydrolysis and promotes its binding to the 30S ribosomal subunits. Also involved in the hydrolysis of GTP during the formation of the 70S ribosomal complex. In Blochmanniella floridana, this protein is Translation initiation factor IF-2.